The chain runs to 245 residues: tRNA pseudouridine synthase A (245 aa).

Catalysis depends on D52, which acts as the Nucleophile. A substrate-binding site is contributed by Y111.

The protein belongs to the tRNA pseudouridine synthase TruA family. In terms of assembly, homodimer.

The catalysed reaction is uridine(38/39/40) in tRNA = pseudouridine(38/39/40) in tRNA. Its function is as follows. Formation of pseudouridine at positions 38, 39 and 40 in the anticodon stem and loop of transfer RNAs. The protein is tRNA pseudouridine synthase A of Rickettsia peacockii (strain Rustic).